The following is a 915-amino-acid chain: Metabotropic glutamate receptor 7 (915 aa).

The N-terminal stretch at 1 to 34 (MVQLRKLLRVLTLMKFPCCVLEVLLCALAAAARG) is a signal peptide. At 35–590 (QEMYAPHSIR…IIKLEWHSPW (556 aa)) the chain is on the extracellular side. The cysteines at positions 67 and 109 are disulfide-linked. An N-linked (GlcNAc...) asparagine glycan is attached at asparagine 98. Residues serine 159, 180–182 (AST), tyrosine 230, and aspartate 314 contribute to the L-glutamate site. Disulfide bonds link cysteine 249-cysteine 541, cysteine 374-cysteine 390, cysteine 430-cysteine 437, cysteine 523-cysteine 542, cysteine 527-cysteine 545, cysteine 548-cysteine 560, and cysteine 563-cysteine 576. Lysine 407 contributes to the L-glutamate binding site. 2 N-linked (GlcNAc...) asparagine glycosylation sites follow: asparagine 458 and asparagine 486. Asparagine 572 carries an N-linked (GlcNAc...) asparagine glycan. A helical membrane pass occupies residues 591–615 (AVIPVFLAMLGIIATIFVMATFIRY). At 616–627 (NDTPIVRASGRE) the chain is on the cytoplasmic side. Residues 628-648 (LSYVLLTGIFLCYIITFLMIA) form a helical membrane-spanning segment. Over 649-654 (KPDVAV) the chain is Extracellular. A helical transmembrane segment spans residues 655–675 (CSFRRVFLGLGMCISYAALLT). Over 676 to 702 (KTNRIYRIFEQGKKSVTAPRLISPTSQ) the chain is Cytoplasmic. Residues 703–723 (LAITSSLISVQLLGVFIWFGV) form a helical membrane-spanning segment. Residues 724-753 (DPPNIIIDYDEHKTMNPEQARGVLKCDITD) lie on the Extracellular side of the membrane. Residues 754 to 775 (LQIICSLGYSILLMVTCTVYAI) traverse the membrane as a helical segment. Residues 776–788 (KTRGVPENFNEAK) are Cytoplasmic-facing. The helical transmembrane segment at 789–810 (PIGFTMYTTCIVWLAFIPIFFG) threads the bilayer. The Extracellular segment spans residues 811-825 (TAQSAEKLYIQTTTL). Residues 826–850 (TISMNLSASVALGMLYMPKVYIIIF) traverse the membrane as a helical segment. Residues 851–915 (HPELNVQKRK…KYVSYNNLVI (65 aa)) lie on the Cytoplasmic side of the membrane. A disordered region spans residues 874-895 (SRLSHKPSDRPNGEAKTELCEN). Residues 879 to 892 (KPSDRPNGEAKTEL) show a composition bias toward basic and acidic residues. Phosphoserine is present on serine 900.

This sequence belongs to the G-protein coupled receptor 3 family. Homodimer. Interacts with PICK1. N-glycosylated. In terms of tissue distribution, expressed in many areas of the brain, especially in the cerebral cortex, hippocampus, and cerebellum. Expression of GRM7 isoforms in non-neuronal tissues appears to be restricted to isoform 3 and isoform 4.

The protein resides in the cell membrane. Its function is as follows. G-protein coupled receptor activated by glutamate that regulates axon outgrowth through the MAPK-cAMP-PKA signaling pathway during neuronal development. Ligand binding causes a conformation change that triggers signaling via guanine nucleotide-binding proteins (G proteins) and modulates the activity of downstream effectors, such as adenylate cyclase that it inhibits. This Homo sapiens (Human) protein is Metabotropic glutamate receptor 7 (GRM7).